The following is a 330-amino-acid chain: Putative protein N-methyltransferase FAM86B2 (330 aa).

An N-acetylmethionine modification is found at methionine 1. Residues tryptophan 139, 165–167 (GSG), tryptophan 228, and alanine 247 contribute to the S-adenosyl-L-methionine site.

The protein belongs to the class I-like SAM-binding methyltransferase superfamily. EEF2KMT family. As to quaternary structure, interacts with EEF2KMT.

The protein is Putative protein N-methyltransferase FAM86B2 (FAM86B2) of Homo sapiens (Human).